A 278-amino-acid polypeptide reads, in one-letter code: MTVLHSVDFFPSGNASVAIEPRLPQADFPEHHHDFHEIVIVEHGTGIHVFNGQPYTITGGTVCFVRDHDRHLYEHTDNLCLTNVLYRSPDRFQFLAGLNQLLPQELDGQYPSHWRVNHSVLQQVRQLVAQMEQQEGENDLPSTASREILFMQLLLLLRKSSLQENLENSASRLNLLLAWLEDHFADEVNWDAVAEQFSLSLRTLHRQLKQQTGVTPQRYLNRLRLMKARHLLRHSEASVTDIAYRCGFSDSNHFSTLFRREFNWSPRDIRQGRDGFLQ.

Residues 174–272 (NLLLAWLEDH…NWSPRDIRQG (99 aa)) form the HTH araC/xylS-type domain. DNA-binding regions (H-T-H motif) lie at residues 191–212 (DAVAEQFSLSLRTLHRQLKQQT) and 239–262 (VTDIAYRCGFSDSNHFSTLFRREF).

In terms of assembly, binds DNA as a dimer.

The protein localises to the cytoplasm. Functionally, activates expression of the rhaBAD and rhaT operons. The polypeptide is HTH-type transcriptional activator RhaS (Escherichia coli O139:H28 (strain E24377A / ETEC)).